The chain runs to 161 residues: Large ribosomal subunit protein uL15 (161 aa).

The segment at 1 to 50 (MKLSDIADNAGSRKKRMRIGRGIGSGKGKTGGRGGKGQTARSGVRINGFE) is disordered. Gly residues predominate over residues 21–37 (RGIGSGKGKTGGRGGKG).

It belongs to the universal ribosomal protein uL15 family. As to quaternary structure, part of the 50S ribosomal subunit.

Its function is as follows. Binds to the 23S rRNA. This chain is Large ribosomal subunit protein uL15, found in Nitrobacter winogradskyi (strain ATCC 25391 / DSM 10237 / CIP 104748 / NCIMB 11846 / Nb-255).